A 415-amino-acid polypeptide reads, in one-letter code: MRSWSSPQVPQLPGRGPELRLYDTSDRQVRPVAAGAGPGSAATMYVCGITPYDATHLGHAATYLAFDLIYRQWLDLGHDVHYVQNVTDVDDPLLERAARDGVDWRALAEREVSLFREDMAALRILAPRDYVGATEAIADVVELVEKMLASGAAYVVDGEFPDIYYRADATLQFGYESGYDRETMLRLFAERGGDPQRPGKTDALDALLWRAARPGEPSWPSPFGNGRPGWHVECAAIALSRIGSGLDIQGGGSDLIFPHHEFTAAHAECVRGERRFARHYVHAGMIGWDGHKMSKSRGNLVLVSQLRGRGVEPAAIRLGLLAGHYRGDRYWSDQVLDEATARLRRWRTATALPAGPDATDVIARVRQYLADDLNTPKALAALDGWTTDALDYGGHDTAAPRLVASAVDALLGVAL.

Cys-47 contacts Zn(2+). L-cysteinyl-5'-AMP is bound by residues 47 to 50 (CGIT), Thr-62, and 85 to 87 (NVT). A 'HIGH' region motif is present at residues 49–59 (ITPYDATHLGH). The short motif at 190–195 (ERGGDP) is the 'ERGGDP' region element. Trp-230 is an L-cysteinyl-5'-AMP binding site. Residue Cys-234 participates in Zn(2+) binding. 252–254 (GSD) contributes to the L-cysteinyl-5'-AMP binding site. His-259 contacts Zn(2+). Ile-286 is an L-cysteinyl-5'-AMP binding site. The short motif at 292 to 296 (KMSKS) is the 'KMSKS' region element.

Belongs to the class-I aminoacyl-tRNA synthetase family. MshC subfamily. Monomer. Requires Zn(2+) as cofactor.

The catalysed reaction is 1D-myo-inositol 2-amino-2-deoxy-alpha-D-glucopyranoside + L-cysteine + ATP = 1D-myo-inositol 2-(L-cysteinylamino)-2-deoxy-alpha-D-glucopyranoside + AMP + diphosphate + H(+). Functionally, catalyzes the ATP-dependent condensation of GlcN-Ins and L-cysteine to form L-Cys-GlcN-Ins. In Mycolicibacterium paratuberculosis (strain ATCC BAA-968 / K-10) (Mycobacterium paratuberculosis), this protein is L-cysteine:1D-myo-inositol 2-amino-2-deoxy-alpha-D-glucopyranoside ligase (mshC).